The following is a 124-amino-acid chain: Large ribosomal subunit protein bL20 (124 aa).

It belongs to the bacterial ribosomal protein bL20 family.

In terms of biological role, binds directly to 23S ribosomal RNA and is necessary for the in vitro assembly process of the 50S ribosomal subunit. It is not involved in the protein synthesizing functions of that subunit. The polypeptide is Large ribosomal subunit protein bL20 (Ehrlichia chaffeensis (strain ATCC CRL-10679 / Arkansas)).